Reading from the N-terminus, the 47-residue chain is Putative beta-neurotoxin (47 aa).

The region spanning 1 to 47 (KEGYMGSDGCKMSCVINDQFCDTECQAKLKGSTGYCYFXGLACYXXG) is the LCN-type CS-alpha/beta domain. Intrachain disulfides connect C14–C36 and C21–C43.

In terms of tissue distribution, expressed by the venom gland.

It localises to the secreted. Causes transient paralysis of the rear legs of and spasms in insects (A.domestica). This is Putative beta-neurotoxin from Rhopalurus junceus (Caribbean blue scorpion).